We begin with the raw amino-acid sequence, 139 residues long: Large ribosomal subunit protein uL22 (139 aa).

The disordered stretch occupies residues V118–R139. Positions K125–R139 are enriched in basic residues.

The protein belongs to the universal ribosomal protein uL22 family. Part of the 50S ribosomal subunit.

This protein binds specifically to 23S rRNA; its binding is stimulated by other ribosomal proteins, e.g. L4, L17, and L20. It is important during the early stages of 50S assembly. It makes multiple contacts with different domains of the 23S rRNA in the assembled 50S subunit and ribosome. Its function is as follows. The globular domain of the protein is located near the polypeptide exit tunnel on the outside of the subunit, while an extended beta-hairpin is found that lines the wall of the exit tunnel in the center of the 70S ribosome. In Saccharopolyspora erythraea (strain ATCC 11635 / DSM 40517 / JCM 4748 / NBRC 13426 / NCIMB 8594 / NRRL 2338), this protein is Large ribosomal subunit protein uL22.